Reading from the N-terminus, the 224-residue chain is Cytidylate kinase (224 aa).

ATP is bound at residue 9 to 17; the sequence is GPSGVGKGT.

Belongs to the cytidylate kinase family. Type 1 subfamily.

Its subcellular location is the cytoplasm. It catalyses the reaction CMP + ATP = CDP + ADP. It carries out the reaction dCMP + ATP = dCDP + ADP. The sequence is that of Cytidylate kinase from Dichelobacter nodosus (strain VCS1703A).